The sequence spans 182 residues: Inner membrane-spanning protein YciB (182 aa).

5 helical membrane-spanning segments follow: residues 22–42 (IYIA…VTYA), 50–70 (MHLI…IFHD), 72–92 (AFIK…LAVS), 118–138 (VTWY…YVAF), and 148–168 (FKVF…VVYL).

The protein belongs to the YciB family.

The protein resides in the cell inner membrane. Plays a role in cell envelope biogenesis, maintenance of cell envelope integrity and membrane homeostasis. In Shewanella woodyi (strain ATCC 51908 / MS32), this protein is Inner membrane-spanning protein YciB.